The following is a 321-amino-acid chain: Phosphatidylglycerol phospholipase C (321 aa).

Positions 2–251 constitute a GP-PDE domain; it reads VEIVGHRAFK…DDPIKARKLC (250 aa). The helical; Anchor for type IV membrane protein transmembrane segment at 297–315 threads the bilayer; it reads WVHIKLCGWSIAYVIFLFL.

It belongs to the glycerophosphoryl diester phosphodiesterase family.

The protein resides in the mitochondrion membrane. Its subcellular location is the lipid droplet. It catalyses the reaction a 1,2-diacyl-sn-glycero-3-phospho-(1'-sn-glycerol) + H2O = sn-glycerol 3-phosphate + a 1,2-diacyl-sn-glycerol + H(+). Its function is as follows. Phosphatidylglycerol phospholipase required for the removal of excess phosphatidylglycerol (PG) via a phospholipase C-type degradation mechanism. This chain is Phosphatidylglycerol phospholipase C (PGC1), found in Saccharomyces cerevisiae (strain ATCC 204508 / S288c) (Baker's yeast).